The following is a 268-amino-acid chain: Thiazole synthase (268 aa).

The active-site Schiff-base intermediate with DXP is the K108. 1-deoxy-D-xylulose 5-phosphate contacts are provided by residues G169, 195 to 196 (AG), and 217 to 218 (NS). Positions 248–268 (RLKENPLASPSSPLDGVISNN) are disordered. Positions 255–268 (ASPSSPLDGVISNN) are enriched in polar residues.

The protein belongs to the ThiG family. Homotetramer. Forms heterodimers with either ThiH or ThiS.

The protein localises to the cytoplasm. It carries out the reaction [ThiS sulfur-carrier protein]-C-terminal-Gly-aminoethanethioate + 2-iminoacetate + 1-deoxy-D-xylulose 5-phosphate = [ThiS sulfur-carrier protein]-C-terminal Gly-Gly + 2-[(2R,5Z)-2-carboxy-4-methylthiazol-5(2H)-ylidene]ethyl phosphate + 2 H2O + H(+). The protein operates within cofactor biosynthesis; thiamine diphosphate biosynthesis. Functionally, catalyzes the rearrangement of 1-deoxy-D-xylulose 5-phosphate (DXP) to produce the thiazole phosphate moiety of thiamine. Sulfur is provided by the thiocarboxylate moiety of the carrier protein ThiS. In vitro, sulfur can be provided by H(2)S. This chain is Thiazole synthase, found in Prochlorococcus marinus (strain NATL2A).